The primary structure comprises 125 residues: MPTFNQLIRHGREEKRRTDRTRALDKCPQKLGACLRVSTRTPKKPNSALRKIAKVRLSNRHDIFAYIPGEGHNLQEHSQVLIRGGRVKDLPGVKFHCIRGVKDLMGIPGRRRGRSKYGAEKPKSI.

It belongs to the universal ribosomal protein uS12 family.

The protein localises to the mitochondrion. Functionally, protein S12 is involved in the translation initiation step. This Brassica napus (Rape) protein is Small ribosomal subunit protein uS12m (RPS12).